The primary structure comprises 156 residues: Small ribosomal subunit protein uS7 (156 aa).

It belongs to the universal ribosomal protein uS7 family. In terms of assembly, part of the 30S ribosomal subunit. Contacts proteins S9 and S11.

In terms of biological role, one of the primary rRNA binding proteins, it binds directly to 16S rRNA where it nucleates assembly of the head domain of the 30S subunit. Is located at the subunit interface close to the decoding center, probably blocks exit of the E-site tRNA. The sequence is that of Small ribosomal subunit protein uS7 from Paraburkholderia phymatum (strain DSM 17167 / CIP 108236 / LMG 21445 / STM815) (Burkholderia phymatum).